The primary structure comprises 279 residues: Large ribosomal subunit protein uL2 (279 aa).

Disordered regions lie at residues 1–59 (MGIR…GGHK) and 224–279 (VAMN…KNKR). Residues 50–59 (TTRHKGGGHK) show a composition bias toward basic residues. Over residues 253-268 (REGRTRRPNKESDKLI) the composition is skewed to basic and acidic residues. Over residues 269–279 (VRRRRTGKNKR) the composition is skewed to basic residues.

The protein belongs to the universal ribosomal protein uL2 family. Part of the 50S ribosomal subunit. Forms a bridge to the 30S subunit in the 70S ribosome.

In terms of biological role, one of the primary rRNA binding proteins. Required for association of the 30S and 50S subunits to form the 70S ribosome, for tRNA binding and peptide bond formation. It has been suggested to have peptidyltransferase activity; this is somewhat controversial. Makes several contacts with the 16S rRNA in the 70S ribosome. This is Large ribosomal subunit protein uL2 from Pseudarthrobacter chlorophenolicus (strain ATCC 700700 / DSM 12829 / CIP 107037 / JCM 12360 / KCTC 9906 / NCIMB 13794 / A6) (Arthrobacter chlorophenolicus).